Reading from the N-terminus, the 581-residue chain is Glutamyl-tRNA reductase (581 aa).

Substrate-binding positions include 49–52, Ser109, 114–116, and Gln120; these read TCNR and EGQ. Cys50 serves as the catalytic Nucleophile. 192 to 197 is a binding site for NADP(+); sequence GAGSMS. The insert stretch occupies residues 292 to 416; the sequence is PAVEDTAVQE…AEAPRPQPVL (125 aa).

The protein belongs to the glutamyl-tRNA reductase family. In terms of assembly, homodimer.

The catalysed reaction is (S)-4-amino-5-oxopentanoate + tRNA(Glu) + NADP(+) = L-glutamyl-tRNA(Glu) + NADPH + H(+). The protein operates within porphyrin-containing compound metabolism; protoporphyrin-IX biosynthesis; 5-aminolevulinate from L-glutamyl-tRNA(Glu): step 1/2. In terms of biological role, catalyzes the NADPH-dependent reduction of glutamyl-tRNA(Glu) to glutamate 1-semialdehyde (GSA). The chain is Glutamyl-tRNA reductase from Streptomyces coelicolor (strain ATCC BAA-471 / A3(2) / M145).